The sequence spans 332 residues: Glycerol-3-phosphate dehydrogenase [NAD(P)+] (332 aa).

Residues Ser11, Phe12, Lys32, and Lys106 each contribute to the NADPH site. Sn-glycerol 3-phosphate is bound by residues Lys106, Gly137, and Ser139. An NADPH-binding site is contributed by Ala141. Residues Lys192, Asp245, Ser255, Arg256, and Asn257 each contribute to the sn-glycerol 3-phosphate site. The active-site Proton acceptor is Lys192. An NADPH-binding site is contributed by Arg256. NADPH is bound by residues Val280 and Glu282.

The protein belongs to the NAD-dependent glycerol-3-phosphate dehydrogenase family.

It localises to the cytoplasm. It carries out the reaction sn-glycerol 3-phosphate + NAD(+) = dihydroxyacetone phosphate + NADH + H(+). It catalyses the reaction sn-glycerol 3-phosphate + NADP(+) = dihydroxyacetone phosphate + NADPH + H(+). Its pathway is membrane lipid metabolism; glycerophospholipid metabolism. Catalyzes the reduction of the glycolytic intermediate dihydroxyacetone phosphate (DHAP) to sn-glycerol 3-phosphate (G3P), the key precursor for phospholipid synthesis. In Staphylococcus aureus (strain USA300), this protein is Glycerol-3-phosphate dehydrogenase [NAD(P)+].